The chain runs to 160 residues: Secreted RxLR effector protein 83 (160 aa).

A signal peptide spans Met1 to Ala21. The short motif at Arg27 to Arg30 is the RxLR element. 2 N-linked (GlcNAc...) asparagine glycosylation sites follow: Asn39 and Asn131.

The protein belongs to the RxLR effector family.

It is found in the secreted. The protein localises to the host nucleus. The protein resides in the host cytoplasm. In terms of biological role, secreted effector that completely suppresses the host cell death induced by cell death-inducing proteins. The sequence is that of Secreted RxLR effector protein 83 from Plasmopara viticola (Downy mildew of grapevine).